The primary structure comprises 546 residues: Chaperonin GroEL (546 aa).

ATP contacts are provided by residues Thr-30–Pro-33, Lys-51, Asp-87–Thr-91, Gly-415, Asn-479–Ala-481, and Asp-495. The tract at residues Lys-526–Phe-546 is disordered. Gly residues predominate over residues Ala-534–Phe-546.

Belongs to the chaperonin (HSP60) family. In terms of assembly, forms a cylinder of 14 subunits composed of two heptameric rings stacked back-to-back. Interacts with the co-chaperonin GroES.

The protein localises to the cytoplasm. It catalyses the reaction ATP + H2O + a folded polypeptide = ADP + phosphate + an unfolded polypeptide.. Together with its co-chaperonin GroES, plays an essential role in assisting protein folding. The GroEL-GroES system forms a nano-cage that allows encapsulation of the non-native substrate proteins and provides a physical environment optimized to promote and accelerate protein folding. This chain is Chaperonin GroEL, found in Xanthomonas euvesicatoria pv. vesicatoria (strain 85-10) (Xanthomonas campestris pv. vesicatoria).